We begin with the raw amino-acid sequence, 195 residues long: Thymidylate kinase (195 aa).

An ATP-binding site is contributed by 7–14 (GIDGSGKT).

This sequence belongs to the thymidylate kinase family.

It catalyses the reaction dTMP + ATP = dTDP + ADP. Its function is as follows. Phosphorylation of dTMP to form dTDP in both de novo and salvage pathways of dTTP synthesis. The polypeptide is Thymidylate kinase (tmk) (Aquifex aeolicus (strain VF5)).